Consider the following 118-residue polypeptide: Large ribosomal subunit protein uL18 (118 aa).

This sequence belongs to the universal ribosomal protein uL18 family. As to quaternary structure, part of the 50S ribosomal subunit; part of the 5S rRNA/L5/L18/L25 subcomplex. Contacts the 5S and 23S rRNAs.

In terms of biological role, this is one of the proteins that bind and probably mediate the attachment of the 5S RNA into the large ribosomal subunit, where it forms part of the central protuberance. The sequence is that of Large ribosomal subunit protein uL18 from Ralstonia pickettii (strain 12J).